The primary structure comprises 402 residues: Multidrug resistance protein MdtH (402 aa).

Residues 1 to 12 (MSRVSQARNLGK) lie on the Cytoplasmic side of the membrane. Residues 13–33 (YFLLIDNMLVVLGFFVVFPLI) traverse the membrane as a helical segment. Topologically, residues 34–98 (SIRFVDQMGW…GFATMGIAHE (65 aa)) are periplasmic. The chain crosses the membrane as a helical span at residues 99–116 (PWLLWFSCLLSGLGGTLF). Over 117-138 (DPPRSALVVKLIRPQQRGRFFS) the chain is Cytoplasmic. A helical transmembrane segment spans residues 139–159 (LLMMQDSASAVIGALLGSWLL). Over 160-164 (QYDFR) the chain is Periplasmic. The helical transmembrane segment at 165–185 (LVCATGAVLFVLCAAFNAWLL) threads the bilayer. Over 186–213 (PAWKLSTVRTPVREGMTRVMRDKRFVTY) the chain is Cytoplasmic. Residues 214–234 (VLTLAGYYMLAVQVMLMLPIM) traverse the membrane as a helical segment. The Periplasmic segment spans residues 235 to 243 (VNDVAGAPS). The chain crosses the membrane as a helical span at residues 244-264 (AVKWMYAIEACLSLTLLYPIA). Topologically, residues 265–276 (RWSEKHFRLEHR) are cytoplasmic. A helical transmembrane segment spans residues 277-297 (LMAGLLIMSLSMMPVGMVSGL). Over 298 to 299 (QQ) the chain is Periplasmic. A helical membrane pass occupies residues 300 to 320 (LFTLICLFYIGSIIAEPARET). Residues 321 to 339 (LSASLADARARGSYMGFSR) are Cytoplasmic-facing. A helical transmembrane segment spans residues 340–360 (LGLAIGGAIGYIGGGWLFDLG). Residues 361–367 (KSAHQPE) lie on the Periplasmic side of the membrane. The chain crosses the membrane as a helical span at residues 368-388 (LPWMMLGIIGIFTFLALGWQF). The Cytoplasmic portion of the chain corresponds to 389 to 402 (SQKRAARRLLERDA).

The protein belongs to the major facilitator superfamily. DHA1 family. MdtH (TC 2.A.1.2.21) subfamily.

Its subcellular location is the cell inner membrane. This Shigella flexneri protein is Multidrug resistance protein MdtH.